The sequence spans 207 residues: Nitrophorin-1 (207 aa).

The first 23 residues, 1–23 (MKSYTALLAVAILCLFAAVGVSG), serve as a signal peptide directing secretion. 2 cysteine pairs are disulfide-bonded: C25-C145 and C64-C194. A heme-binding site is contributed by H82.

This sequence belongs to the calycin superfamily. Nitrophorin family. Salivary gland (at protein level).

It is found in the secreted. Functionally, heme-based protein that deliver nitric oxide gas (NO) to the victim while feeding, resulting in vasodilation and inhibition of platelet aggregation. Reversibly binds nitric oxide (NO). Also binds tightly to histamine, which is released by the host to induce wound healing. The protein is Nitrophorin-1 of Rhodnius prolixus (Triatomid bug).